Reading from the N-terminus, the 146-residue chain is [Ribosomal protein bS18]-alanine N-acetyltransferase (146 aa).

An N-acetyltransferase domain is found at 2–146; sequence SIISQIEACD…ENAVVMACYL (145 aa). 69–71 provides a ligand contact to acetyl-CoA; it reads IAI. Glutamate 103 acts as the Proton acceptor in catalysis. Residue asparagine 108 coordinates acetyl-CoA. Tyrosine 114 serves as the catalytic Proton donor.

The protein belongs to the acetyltransferase family. RimI subfamily.

Its subcellular location is the cytoplasm. The catalysed reaction is N-terminal L-alanyl-[ribosomal protein bS18] + acetyl-CoA = N-terminal N(alpha)-acetyl-L-alanyl-[ribosomal protein bS18] + CoA + H(+). In terms of biological role, acetylates the N-terminal alanine of ribosomal protein bS18. The chain is [Ribosomal protein bS18]-alanine N-acetyltransferase from Haemophilus influenzae (strain ATCC 51907 / DSM 11121 / KW20 / Rd).